Reading from the N-terminus, the 288-residue chain is Programmed cell death protein 1 (288 aa).

The first 24 residues, 1–24 (MQIPQAPWPVVWAVLQLGWRPGWF), serve as a signal peptide directing secretion. A nivolumab binding region spans residues 25 to 34 (LDSPDRPWNP). The Extracellular portion of the chain corresponds to 25 to 170 (LDSPDRPWNP…RPAGQFQTLV (146 aa)). Residues 35 to 145 (PTFSPALLVV…ESLRAELRVT (111 aa)) form the Ig-like V-type domain. Asn-49, Asn-58, Asn-74, and Asn-116 each carry an N-linked (GlcNAc...) asparagine glycan. Cys-54 and Cys-123 form a disulfide bridge. The interaction with CD274/PDCD1L1 stretch occupies residues 70–77 (MSPSNQTD). The tract at residues 74-99 (NQTDKLAAFPEDRSQPGQDCRFRVTQ) is pembrolizumab binding. The chain crosses the membrane as a helical span at residues 171-191 (VGVVGGLLGSLVLLVWVLAVI). Residues 192 to 288 (CSRAARGTIG…PEDGHCSWPL (97 aa)) lie on the Cytoplasmic side of the membrane. The short motif at 221–226 (VDYGEL) is the ITIM motif element. Tyr-223 carries the post-translational modification Phosphotyrosine. A Glycyl lysine isopeptide (Lys-Gly) (interchain with G-Cter in ubiquitin) cross-link involves residue Lys-233. A Phosphothreonine; by MAPK3 modification is found at Thr-234. The ITSM motif signature appears at 247 to 251 (EYATI). A Phosphotyrosine modification is found at Tyr-248. Residues 254 to 288 (PSGMGTSSPARRGSADGPRSAQPLRPEDGHCSWPL) are disordered. Positions 278 to 288 (RPEDGHCSWPL) are enriched in basic and acidic residues.

In terms of assembly, monomer. Interacts with CD274/PDCD1L1. Interacts with CD273/PDCD1LG2. Interacts with FBXO38; leading to ubiquitination and degradation of PDCD1 by the proteasome. Post-translationally, ubiquitinated at Lys-233 by the SCF(FBXO38) complex, leading to its proteasomal degradation. Ubiquitinated via 'Lys-48'-linked polyubiquitin chains. Deubiquitinated and thus stabilized by USP5. In terms of processing, tyrosine phosphorylated at Tyr-223 (within ITIM motif) and Tyr-248 (ITSM motif) upon ligand binding. Phosphorylation at Tyr-248 promotes the recruitment of the protein tyrosine phosphatase PTPN11/SHP-2 that mediates dephosphorylation of key TCR proximal signaling molecules, such as ZAP70, PRKCQ/PKCtheta and CD247/CD3zeta. Phosphorylation at Thr-234 promotes the recruitment of the deubiquitinase USP5. N-glycosylation at Asn-58 contains at least two N-acetylglucosamine units and one fucose. N-glycosylation does not affect binding to nivolumab drug.

The protein resides in the cell membrane. With respect to regulation, inhibited by pembrolizumab (also named MK-3475 or lambrolizumab), a monoclonal antibody that prevents the interaction with CD274/PDCD1L1. Inhibited by nivolumab (also named ONO-4538, BMS-936558 or Opdivo), a monoclonal antibody that prevents the interaction with CD274/PDCD1L1. The interaction with nivolumab is not dependent on glycosylation and depends on a loop at the N-terminus (N-terminal loop, corresponding to residues 25-34). Targeting the interaction between PDCD1 and CD274/PDCD1L1 with pembrolizumab and nivolumab antibodies has demonstrated great promise as a strategy for controlling and eradicating cancer. Pembrolizumab and nivolumab are used for treatment of patients with advanced melanoma. These antibodies are also effective against other cancers, such as non-small cell lung cancer, renal cell carcinoma, bladder cancer and Hodgkin's lymphoma. Inhibitory receptor on antigen activated T-cells that plays a critical role in induction and maintenance of immune tolerance to self. Delivers inhibitory signals upon binding to ligands CD274/PDCD1L1 and CD273/PDCD1LG2. Following T-cell receptor (TCR) engagement, PDCD1 associates with CD3-TCR in the immunological synapse and directly inhibits T-cell activation. Suppresses T-cell activation through the recruitment of PTPN11/SHP-2: following ligand-binding, PDCD1 is phosphorylated within the ITSM motif, leading to the recruitment of the protein tyrosine phosphatase PTPN11/SHP-2 that mediates dephosphorylation of key TCR proximal signaling molecules, such as ZAP70, PRKCQ/PKCtheta and CD247/CD3zeta. Functionally, the PDCD1-mediated inhibitory pathway is exploited by tumors to attenuate anti-tumor immunity and escape destruction by the immune system, thereby facilitating tumor survival. The interaction with CD274/PDCD1L1 inhibits cytotoxic T lymphocytes (CTLs) effector function. The blockage of the PDCD1-mediated pathway results in the reversal of the exhausted T-cell phenotype and the normalization of the anti-tumor response, providing a rationale for cancer immunotherapy. The chain is Programmed cell death protein 1 from Homo sapiens (Human).